A 486-amino-acid chain; its full sequence is Cysteine--tRNA ligase (486 aa).

Position 30 (C30) interacts with Zn(2+). A 'HIGH' region motif is present at residues 32–42 (PTVYDRAHLGN). Positions 221, 246, and 250 each coordinate Zn(2+). A 'KMSKS' region motif is present at residues 279 to 283 (KMSKS). K282 contributes to the ATP binding site.

This sequence belongs to the class-I aminoacyl-tRNA synthetase family. In terms of assembly, monomer. Zn(2+) serves as cofactor.

It is found in the cytoplasm. The enzyme catalyses tRNA(Cys) + L-cysteine + ATP = L-cysteinyl-tRNA(Cys) + AMP + diphosphate. This chain is Cysteine--tRNA ligase, found in Cereibacter sphaeroides (strain ATCC 17025 / ATH 2.4.3) (Rhodobacter sphaeroides).